Here is an 844-residue protein sequence, read N- to C-terminus: DNA mismatch repair protein MutS (844 aa).

Residue 610 to 617 (GPNMGGKS) participates in ATP binding.

It belongs to the DNA mismatch repair MutS family.

Functionally, this protein is involved in the repair of mismatches in DNA. It is possible that it carries out the mismatch recognition step. This protein has a weak ATPase activity. In Francisella tularensis subsp. mediasiatica (strain FSC147), this protein is DNA mismatch repair protein MutS.